The primary structure comprises 66 residues: Large ribosomal subunit protein bL33c (66 aa).

The protein belongs to the bacterial ribosomal protein bL33 family.

It is found in the plastid. Its subcellular location is the chloroplast. In Nicotiana sylvestris (Wood tobacco), this protein is Large ribosomal subunit protein bL33c.